A 403-amino-acid polypeptide reads, in one-letter code: GPI mannosyltransferase 1 (403 aa).

The Cytoplasmic segment spans residues 1-4; it reads MTGE. Residues 5 to 25 form a helical membrane-spanning segment; it reads EWGLTVLSFLVRVGFFLFGIY. At 26–78 the chain is on the lumenal side; that stretch reads QDANFKVRYTDIDYFVFHDAAKYVYEGKSPYARDTYRYTPLLSWLLVPNHYFG. A helical transmembrane segment spans residues 79–99; that stretch reads WFHLGKVIFVIFDLVTGLIIM. Over 100-110 the chain is Cytoplasmic; that stretch reads KLLNQAISRKR. Residues 111–131 traverse the membrane as a helical segment; the sequence is ALILESIWLLNPMVITISTRG. A topological domain (lumenal) is located at residue asparagine 132. Residues 133–149 traverse the membrane as a helical segment; it reads AESVLCCLIMFTLFFLQ. The Cytoplasmic segment spans residues 150–160; it reads KSRYTLAGILY. A helical membrane pass occupies residues 161 to 181; the sequence is GLSIHFKIYPIIYCIPIAIFI. The Lumenal portion of the chain corresponds to 182 to 193; the sequence is YYNKRNQGPRTQ. A helical transmembrane segment spans residues 194 to 214; that stretch reads LTSLLNIGLSTLTTLLGCGWA. The Cytoplasmic portion of the chain corresponds to 215-266; it reads MYKIYGYEFLDQAYLYHLYRTDHRHNFSVWNMLLYLDSANKENGESNLSRYA. Residues 267-287 traverse the membrane as a helical segment; it reads FVPQLLLVLVTGCLEWWNPTF. Over 288–310 the chain is Lumenal; it reads DNLLRVLFVQTFAFVTYNKVCTS. The chain crosses the membrane as a helical span at residues 311–331; that stretch reads QYFVWYLIFLPFYLSRTHIGW. Topologically, residues 332 to 334 are cytoplasmic; it reads KKG. Residues 335–355 form a helical membrane-spanning segment; sequence LLMATLWVGTQGIWLSQGYYL. Residues 356–361 lie on the Lumenal side of the membrane; the sequence is EFEGKN. The chain crosses the membrane as a helical span at residues 362–382; it reads VFYPGLFIASVLFFVTNVWLL. Residues 383–403 are Cytoplasmic-facing; that stretch reads GQFITDIKIPTQPTVSNKKNN.

Belongs to the PIGM family.

It is found in the endoplasmic reticulum membrane. It functions in the pathway glycolipid biosynthesis; glycosylphosphatidylinositol-anchor biosynthesis. Its function is as follows. Mannosyltransferase involved in glycosylphosphatidylinositol-anchor biosynthesis. Transfers the first alpha-1,4-mannose to GlcN-acyl-PI during GPI precursor assembly. Required for cell wall integrity. The polypeptide is GPI mannosyltransferase 1 (GPI14) (Saccharomyces cerevisiae (strain ATCC 204508 / S288c) (Baker's yeast)).